Consider the following 227-residue polypeptide: Lipoprotein-releasing system ATP-binding protein LolD (227 aa).

Residues 6–227 enclose the ABC transporter domain; sequence LEMRGITKSY…RLDAGQLSDV (222 aa). 43–50 contributes to the ATP binding site; that stretch reads APSGAGKS.

It belongs to the ABC transporter superfamily. Lipoprotein translocase (TC 3.A.1.125) family. As to quaternary structure, the complex is composed of two ATP-binding proteins (LolD) and two transmembrane proteins (LolC and LolE).

The protein resides in the cell inner membrane. Part of the ABC transporter complex LolCDE involved in the translocation of mature outer membrane-directed lipoproteins, from the inner membrane to the periplasmic chaperone, LolA. Responsible for the formation of the LolA-lipoprotein complex in an ATP-dependent manner. This chain is Lipoprotein-releasing system ATP-binding protein LolD, found in Roseobacter denitrificans (strain ATCC 33942 / OCh 114) (Erythrobacter sp. (strain OCh 114)).